The following is an 860-amino-acid chain: Alanine--tRNA ligase (860 aa).

Residues His553, His557, Cys655, and His659 each contribute to the Zn(2+) site.

Belongs to the class-II aminoacyl-tRNA synthetase family. It depends on Zn(2+) as a cofactor.

The protein localises to the cytoplasm. It catalyses the reaction tRNA(Ala) + L-alanine + ATP = L-alanyl-tRNA(Ala) + AMP + diphosphate. Its function is as follows. Catalyzes the attachment of alanine to tRNA(Ala) in a two-step reaction: alanine is first activated by ATP to form Ala-AMP and then transferred to the acceptor end of tRNA(Ala). Also edits incorrectly charged Ser-tRNA(Ala) and Gly-tRNA(Ala) via its editing domain. This Legionella pneumophila (strain Paris) protein is Alanine--tRNA ligase.